We begin with the raw amino-acid sequence, 543 residues long: Ribosomal protein arginine N-methyltransferase rmt3 (543 aa).

Residues 58-81 (FCCLFCDSTFTCLKDLWSHCKEAH) form a C2H2-type zinc finger. The 327-residue stretch at 217-543 (DSYYFESYAG…KADSQSYVLN (327 aa)) folds into the SAM-dependent MTase PRMT-type domain. 6 residues coordinate S-adenosyl-L-homocysteine: arginine 239, glycine 263, aspartate 285, serine 287, isoleucine 313, and glutamate 314. Catalysis depends on residues glutamate 329 and glutamate 338.

This sequence belongs to the class I-like SAM-binding methyltransferase superfamily. Protein arginine N-methyltransferase family. Interacts with ef1a-c, rps2 and rps24. Note=Associates with the 40S ribosomal particle.

Its subcellular location is the cytoplasm. The protein localises to the cytosol. It catalyses the reaction L-arginyl-[protein] + S-adenosyl-L-methionine = N(omega)-methyl-L-arginyl-[protein] + S-adenosyl-L-homocysteine + H(+). It carries out the reaction L-arginyl-[protein] + 2 S-adenosyl-L-methionine = N(omega),N(omega)-dimethyl-L-arginyl-[protein] + 2 S-adenosyl-L-homocysteine + 2 H(+). Functionally, methylates (mono and asymmetric dimethylation) the guanidino nitrogens of arginyl residues in ribosomal protein rps2. The polypeptide is Ribosomal protein arginine N-methyltransferase rmt3 (rmt3) (Schizosaccharomyces pombe (strain 972 / ATCC 24843) (Fission yeast)).